Reading from the N-terminus, the 292-residue chain is Cholesterol ring-cleaving hydrolase IpdA subunit (292 aa).

This sequence belongs to the 3-oxoacid CoA-transferase subunit A family. As to quaternary structure, heterotetramer composed of 2 IpdA subunits and 2 IpdB subunits.

It carries out the reaction (3E)-2-(2-carboxylatoethyl)-3-methyl-6-oxocyclohex-1-ene-1-carboxyl-CoA + H2O = 6-methyl-3,7-dioxodecanedioyl-CoA. The protein operates within steroid metabolism; cholesterol degradation. Functionally, involved in the final steps of cholesterol and steroid degradation. Opens the last steroid ring of cholesterol by catalyzing the hydrolysis of (3E)-2-(2-carboxylatoethyl)-3-methyl-6-oxocyclohex-1-ene-1-carboxyl-CoA (COCHEA-CoA) to 6-methyl-3,7-dioxodecanedioyl-CoA (MeDODA-CoA). In Mycobacterium tuberculosis (strain CDC 1551 / Oshkosh), this protein is Cholesterol ring-cleaving hydrolase IpdA subunit.